Reading from the N-terminus, the 476-residue chain is Bifunctional protein HldE (476 aa).

The segment at 1–319 (MKVTLPAFEK…EALKSHQGES (319 aa)) is ribokinase. 195-198 (NMSE) lines the ATP pocket. Residue aspartate 264 is part of the active site. Residues 345–476 (MTNGCFDILH…AIIQNIMSRH (132 aa)) form a cytidylyltransferase region.

The protein in the N-terminal section; belongs to the carbohydrate kinase PfkB family. This sequence in the C-terminal section; belongs to the cytidylyltransferase family. Homodimer.

The enzyme catalyses D-glycero-beta-D-manno-heptose 7-phosphate + ATP = D-glycero-beta-D-manno-heptose 1,7-bisphosphate + ADP + H(+). It carries out the reaction D-glycero-beta-D-manno-heptose 1-phosphate + ATP + H(+) = ADP-D-glycero-beta-D-manno-heptose + diphosphate. It participates in nucleotide-sugar biosynthesis; ADP-L-glycero-beta-D-manno-heptose biosynthesis; ADP-L-glycero-beta-D-manno-heptose from D-glycero-beta-D-manno-heptose 7-phosphate: step 1/4. The protein operates within nucleotide-sugar biosynthesis; ADP-L-glycero-beta-D-manno-heptose biosynthesis; ADP-L-glycero-beta-D-manno-heptose from D-glycero-beta-D-manno-heptose 7-phosphate: step 3/4. Catalyzes the phosphorylation of D-glycero-D-manno-heptose 7-phosphate at the C-1 position to selectively form D-glycero-beta-D-manno-heptose-1,7-bisphosphate. Functionally, catalyzes the ADP transfer from ATP to D-glycero-beta-D-manno-heptose 1-phosphate, yielding ADP-D-glycero-beta-D-manno-heptose. This is Bifunctional protein HldE from Shewanella amazonensis (strain ATCC BAA-1098 / SB2B).